Consider the following 874-residue polypeptide: Alanine--tRNA ligase (874 aa).

Zn(2+)-binding residues include H562, H566, C664, and H668.

The protein belongs to the class-II aminoacyl-tRNA synthetase family. Requires Zn(2+) as cofactor.

It is found in the cytoplasm. The enzyme catalyses tRNA(Ala) + L-alanine + ATP = L-alanyl-tRNA(Ala) + AMP + diphosphate. In terms of biological role, catalyzes the attachment of alanine to tRNA(Ala) in a two-step reaction: alanine is first activated by ATP to form Ala-AMP and then transferred to the acceptor end of tRNA(Ala). Also edits incorrectly charged Ser-tRNA(Ala) and Gly-tRNA(Ala) via its editing domain. This Shewanella putrefaciens (strain CN-32 / ATCC BAA-453) protein is Alanine--tRNA ligase.